The chain runs to 332 residues: MADHLTANGEEMGVYNLQCIDLSNPDIHESAALLRKACMESGIFYVINHGISQEFMDETFAQFKRFFDLPIEEKMKLVWNKNLRGYRPPIQAVIDDKTKQKDFSEAFHIGVEVSEDDPNAHDFFYGPNLWPPADLLPGWRKAMEKYHQEATNVARKIGRVIAVALDLNEDFFVQPELIGSANANYTNMFHYGVHGANLLKDVVGTTPHCDLNLFTLLATDDIWGLQICREKNAESQVWEAIAPVKGAYIVNVGDMLEMLTNGIFRSILHRVVFNQERYSTGTFICPNHDYIIKCLPTCTSEENPPKYPTMRTGQYIYNRFNQLSASTVGKKA.

The 106-residue stretch at 181-286 (ANANYTNMFH…RYSTGTFICP (106 aa)) folds into the Fe2OG dioxygenase domain. H208, D210, and H269 together coordinate Fe cation. Position 277 (R277) interacts with 2-oxoglutarate.

Belongs to the iron/ascorbate-dependent oxidoreductase family. The cofactor is Fe(2+). In terms of tissue distribution, mainly expressed in petioles and, to a lower extent, in roots.

It catalyses the reaction (1S,3bR,4R,5aR,9aR,9bR,11aS)-1-(1-hydroxy-4-oxobutan-2-yl)-3b,6,6,9a,11a-pentamethyl-7-oxo-1H,2H,3bH,4H,5H,5aH,6H,7H,9aH,9bH,10H,11H,11aH-cyclopenta[a]phenanthren-4-yl acetate + 2-oxoglutarate + O2 = azadirone + succinate + CO2 + 2 H2O. It functions in the pathway secondary metabolite biosynthesis; terpenoid biosynthesis. Its function is as follows. 2-oxoglutarate-Fe(II) type oxidoreductase involved in the biosynthesis of limonoids triterpene natural products such as azadirachtin, an antifeedant widely used as bioinsecticide, and possessing many medicinal applications including anti-tumoral, anti-malarial, anti-rheumatic, antibacterial, anti-inflammatory, anti-pyretic and diuretic effects. Catalyzes the formation of azadirone. In Melia azedarach (Chinaberry tree), this protein is Azadirone synthase LFS.